The following is a 1152-amino-acid chain: DNA-directed RNA polymerase subunit beta' (1152 aa).

Zn(2+)-binding residues include C60, C62, C75, and C78. Residues D449, D451, and D453 each contribute to the Mg(2+) site. Zn(2+)-binding residues include C779, C853, C860, and C863.

The protein belongs to the RNA polymerase beta' chain family. As to quaternary structure, the RNAP catalytic core consists of 2 alpha, 1 beta, 1 beta' and 1 omega subunit. When a sigma factor is associated with the core the holoenzyme is formed, which can initiate transcription. Mg(2+) is required as a cofactor. It depends on Zn(2+) as a cofactor.

It carries out the reaction RNA(n) + a ribonucleoside 5'-triphosphate = RNA(n+1) + diphosphate. Its function is as follows. DNA-dependent RNA polymerase catalyzes the transcription of DNA into RNA using the four ribonucleoside triphosphates as substrates. The polypeptide is DNA-directed RNA polymerase subunit beta' (Carboxydothermus hydrogenoformans (strain ATCC BAA-161 / DSM 6008 / Z-2901)).